A 261-amino-acid chain; its full sequence is MLIQLICQAPQRAQELEQIAARWQLQASDDSPFALVLSEERLELRKLDEPKLGAIYVDWVEGAVAHRRKFGGGKGQSIAKAAGLNKGVTPVVLDATAGLGRDAFVLASLGCRVQMVERHPVVAALLEDGLQRAKQDDEIGAWVSERISLLHASSHDALQQLASDPNFTSPDVVYLDPMYPHPENKKKTALVKKEMRVFQSLVGADNDADALLEPALQLAQKRVVVKRPDYAPWLGNRKPSMAMETKKNRFDVYVIAAMSGE.

Residues 101 to 102 (RD), 117 to 118 (ER), 153 to 154 (SS), and aspartate 176 each bind S-adenosyl-L-methionine.

This sequence belongs to the methyltransferase superfamily. RsmJ family.

Its subcellular location is the cytoplasm. It catalyses the reaction guanosine(1516) in 16S rRNA + S-adenosyl-L-methionine = N(2)-methylguanosine(1516) in 16S rRNA + S-adenosyl-L-homocysteine + H(+). Its function is as follows. Specifically methylates the guanosine in position 1516 of 16S rRNA. This is Ribosomal RNA small subunit methyltransferase J from Vibrio cholerae serotype O1 (strain ATCC 39315 / El Tor Inaba N16961).